We begin with the raw amino-acid sequence, 672 residues long: COBRA-like protein 10 (672 aa).

The first 35 residues, 1-35 (MRAIDVKTGMKIPWDVRYSLSLFIFLSSILFLSNG), serve as a signal peptide directing secretion. N-linked (GlcNAc...) asparagine glycans are attached at residues N79, N135, N264, N328, N339, N368, N422, N442, N483, N562, N570, and N589. The CBM2 domain maps to 502–607 (KLPCPDNCGV…PVPGKQQSVI (106 aa)). S646 carries GPI-anchor amidated serine lipidation. The propeptide at 647–672 (SGHRRGISVSMSFVFATIAAFALMMD) is removed in mature form. The Required for processing by the PIG complex, a critical step for apical plasma membrane localization in pollen tubes signature appears at 664–672 (IAAFALMMD).

It belongs to the COBRA family. The GPI-anchor attachment at Ser-646 requires APTG1. As to expression, expressed in roots, stems, leaves, flowers and siliques. Specific expression in the pollen tube.

The protein resides in the cell membrane. Its subcellular location is the cytoplasm. It is found in the vesicle. Its function is as follows. Involved in the deposition of apical pectin cap and cellulose microfibrils in pollen tubes. Not essential for pollen development, hydration or germination, but required for pollen tubes growth in the female transmitting tract of pistil and toward micropyles, via the perception of ovule guidance cues. This chain is COBRA-like protein 10, found in Arabidopsis thaliana (Mouse-ear cress).